A 470-amino-acid chain; its full sequence is 5-hydroxytryptamine receptor 2A (470 aa).

At 1-80 (MDVLCEENTS…LQEKNWSALL (80 aa)) the chain is on the extracellular side. Asn-8, Asn-38, Asn-44, Asn-51, Asn-54, and Asn-75 each carry an N-linked (GlcNAc...) asparagine glycan. Residues 81–97 (TAVVIILTIAGNILVIM) form a helical membrane-spanning segment. The Cytoplasmic segment spans residues 98–111 (AVSLEKKLQNATNY). A helical membrane pass occupies residues 112–137 (FLMSLAIADMLLGFLVMPVSMLTILY). The Extracellular segment spans residues 138 to 146 (GYRWPLPSK). A helical membrane pass occupies residues 147-171 (LCAVWIYLDVLFSTASIMHLCAISL). An intrachain disulfide couples Cys-148 to Cys-227. Asp-155 serves as a coordination point for serotonin. Positions 172 to 174 (DRY) match the DRY motif; important for ligand-induced conformation changes motif. The Cytoplasmic segment spans residues 172 to 191 (DRYVAIQNPIHHRRFNSRTK). Residues 192 to 215 (AFLKIIAVWTISVGISMPIPVFGL) form a helical membrane-spanning segment. The Extracellular portion of the chain corresponds to 216 to 232 (QDDSKVFKEGSCLLADD). Residues 233–258 (NFVLIGSFVSFFIPLTIMVITYFLTI) form a helical membrane-spanning segment. Topologically, residues 259-321 (KSLQKEATLC…QSISNEQKAC (63 aa)) are cytoplasmic. Position 280 is a phosphoserine (Ser-280). A helical membrane pass occupies residues 322-347 (KVLGIVFFLFVVMWCPFFITNIMAVI). A serotonin-binding site is contributed by Asn-342. A disulfide bridge links Cys-348 with Cys-352. The Extracellular segment spans residues 348–355 (CKESCNED). A helical membrane pass occupies residues 356–381 (VIGALLNVFVWIGYLSSAVNPLVYTL). Residues 375–379 (NPLVY) carry the NPxxY motif; important for ligand-induced conformation changes and signaling motif. Topologically, residues 382-470 (FNKTYRSAFS…NTVNEKVSCV (89 aa)) are cytoplasmic. A disordered region spans residues 448–470 (GKQHSEDAPADNSNTVNEKVSCV). Over residues 458 to 470 (DNSNTVNEKVSCV) the composition is skewed to polar residues. The PDZ-binding signature appears at 468-470 (SCV).

Belongs to the G-protein coupled receptor 1 family. In terms of assembly, interacts (via C-terminus) with MPDZ and PATJ. May interact (via C-terminus) with MPP3, PRDX6, DLG4, DLG1, CASK, APBA1 and MAGI2. Interacts with GRM2 and DRD2; this may affect signaling.

It localises to the cell membrane. The protein resides in the cell projection. The protein localises to the dendrite. It is found in the axon. Its subcellular location is the cytoplasmic vesicle. It localises to the membrane. The protein resides in the caveola. The protein localises to the presynapse. G-protein coupled receptor activity is regulated by lipids: oleamide increases HTR2A-mediated activity. In terms of biological role, G-protein coupled receptor for 5-hydroxytryptamine (serotonin). Also functions as a receptor for various drugs and psychoactive substances, including mescaline, psilocybin, 1-(2,5-dimethoxy-4-iodophenyl)-2-aminopropane (DOI) and lysergic acid diethylamide (LSD). Ligand binding causes a conformation change that triggers signaling via guanine nucleotide-binding proteins (G proteins) and modulates the activity of downstream effectors. HTR2A is coupled to G(q)/G(11) G alpha proteins and activates phospholipase C-beta, releasing diacylglycerol (DAG) and inositol 1,4,5-trisphosphate (IP3) second messengers that modulate the activity of phosphatidylinositol 3-kinase and promote the release of Ca(2+) ions from intracellular stores, respectively. Beta-arrestin family members inhibit signaling via G proteins and mediate activation of alternative signaling pathways. Affects neural activity, perception, cognition and mood. Plays a role in the regulation of behavior, including responses to anxiogenic situations and psychoactive substances. Plays a role in intestinal smooth muscle contraction, and may play a role in arterial vasoconstriction. The chain is 5-hydroxytryptamine receptor 2A (HTR2A) from Sus scrofa (Pig).